The sequence spans 333 residues: D-glutamate N-acetyltransferase (333 aa).

It belongs to the N-acetyltransferase DgcN family.

It catalyses the reaction D-glutamate + acetyl-CoA = N-acetyl-D-glutamate + CoA + H(+). It functions in the pathway amino-acid degradation. In terms of biological role, N-acetyltransferase involved in a deamination-independent D-glutamate degradation pathway, named the DgcN-DgcA pathway. Catalyzes the transfer of the acetyl moiety from acetyl-CoA to D-glutamate to generate N-acetyl-D-glutamate. The sequence is that of D-glutamate N-acetyltransferase from Tritonibacter scottomollicae (Epibacterium scottomollicae).